Consider the following 200-residue polypeptide: Small ribosomal subunit protein uS4c (200 aa).

Positions 91 to 154 constitute an S4 RNA-binding domain; sequence MRLDNVVFRL…NSRKMVTEAN (64 aa).

It belongs to the universal ribosomal protein uS4 family. As to quaternary structure, part of the 30S ribosomal subunit. Contacts protein S5. The interaction surface between S4 and S5 is involved in control of translational fidelity.

Its subcellular location is the plastid. It localises to the chloroplast. In terms of biological role, one of the primary rRNA binding proteins, it binds directly to 16S rRNA where it nucleates assembly of the body of the 30S subunit. With S5 and S12 plays an important role in translational accuracy. The protein is Small ribosomal subunit protein uS4c (rps4) of Oltmannsiellopsis viridis (Marine flagellate).